We begin with the raw amino-acid sequence, 139 residues long: Large ribosomal subunit protein bL21 (139 aa).

This sequence belongs to the bacterial ribosomal protein bL21 family. Part of the 50S ribosomal subunit. Contacts protein L20.

This protein binds to 23S rRNA in the presence of protein L20. The protein is Large ribosomal subunit protein bL21 of Prochlorococcus marinus (strain NATL1A).